The primary structure comprises 312 residues: Light-independent protochlorophyllide reductase iron-sulfur ATP-binding protein (312 aa).

Residues 55–60 (GIGKST) and Lys-84 contribute to the ATP site. A Mg(2+)-binding site is contributed by Ser-59. [4Fe-4S] cluster contacts are provided by Cys-140 and Cys-174. Residues 225–226 (NR) and 249–251 (PDL) each bind ATP.

This sequence belongs to the NifH/BchL/ChlL family. As to quaternary structure, homodimer. Protochlorophyllide reductase is composed of three subunits; BchL, BchN and BchB. The cofactor is [4Fe-4S] cluster.

It carries out the reaction chlorophyllide a + oxidized 2[4Fe-4S]-[ferredoxin] + 2 ADP + 2 phosphate = protochlorophyllide a + reduced 2[4Fe-4S]-[ferredoxin] + 2 ATP + 2 H2O. It participates in porphyrin-containing compound metabolism; bacteriochlorophyll biosynthesis (light-independent). Its function is as follows. Component of the dark-operative protochlorophyllide reductase (DPOR) that uses Mg-ATP and reduced ferredoxin to reduce ring D of protochlorophyllide (Pchlide) to form chlorophyllide a (Chlide). This reaction is light-independent. The L component serves as a unique electron donor to the NB-component of the complex, and binds Mg-ATP. The protein is Light-independent protochlorophyllide reductase iron-sulfur ATP-binding protein of Rhodopseudomonas palustris (strain ATCC BAA-98 / CGA009).